The following is a 560-amino-acid chain: Membrane protein insertase YidC (560 aa).

Residues 1-21 (MDIKRTILIAALAVVSYVMVL) traverse the membrane as a helical segment. The segment at 42 to 66 (VAPGLPDGVPAGNNGASADVPSANA) is disordered. The next 5 membrane-spanning stretches (helical) occupy residues 341–361 (LELTVDYGFLWFIAQPIFWLL), 367–387 (LLGNWGWSIIVLTMLIKGLFF), 437–457 (LGGCLPILVQMPVFLALYWVL), 468–488 (WMLWITDLSIKDPFFILPIIM), and 515–535 (PIIFTFFFLWFPAGLVLYWVV).

This sequence belongs to the OXA1/ALB3/YidC family. Type 1 subfamily. As to quaternary structure, interacts with the Sec translocase complex via SecD. Specifically interacts with transmembrane segments of nascent integral membrane proteins during membrane integration.

It is found in the cell inner membrane. Its function is as follows. Required for the insertion and/or proper folding and/or complex formation of integral membrane proteins into the membrane. Involved in integration of membrane proteins that insert both dependently and independently of the Sec translocase complex, as well as at least some lipoproteins. Aids folding of multispanning membrane proteins. The protein is Membrane protein insertase YidC of Pseudomonas putida (strain GB-1).